The primary structure comprises 473 residues: GDP-fucose protein O-fucosyltransferase 2 (473 aa).

An N-terminal signal peptide occupies residues 1–25 (MKNMIYNLISISLYSLIIILTDIYA). Residues 59–63 (GEGFN), 283–285 (HLR), and 379–380 (RF) contribute to the GDP-beta-L-fucose site. E60 (proton acceptor) is an active-site residue.

Belongs to the glycosyltransferase 68 family.

The protein localises to the endoplasmic reticulum. It catalyses the reaction L-seryl-[protein] + GDP-beta-L-fucose = 3-O-(alpha-L-fucosyl)-L-seryl-[protein] + GDP + H(+). It carries out the reaction L-threonyl-[protein] + GDP-beta-L-fucose = 3-O-(alpha-L-fucosyl)-L-threonyl-[protein] + GDP + H(+). Its pathway is protein modification; protein glycosylation. In terms of biological role, catalyzes the reaction that attaches fucose through an O-glycosidic linkage to a conserved serine or threonine residue in the consensus sequence C1-X-X-S/T-C2 of thrombospondin type I repeats (TSRs) where C1 and C2 are the first and second cysteines of the repeat, respectively. O-fucosylates sporozoite proteins CSP and TRAP. O-fucosylation regulates stability and intracellular trafficking of TRAP but not of CSP. Dispensable for parasite transmission to the mosquito vector and/or infection of the vertebrate host hepatocytes. The protein is GDP-fucose protein O-fucosyltransferase 2 of Plasmodium berghei (strain Anka).